The following is a 158-amino-acid chain: NAD(P)H-quinone oxidoreductase subunit J, chloroplastic (158 aa).

This sequence belongs to the complex I 30 kDa subunit family. As to quaternary structure, NDH is composed of at least 16 different subunits, 5 of which are encoded in the nucleus.

The protein resides in the plastid. It localises to the chloroplast thylakoid membrane. It carries out the reaction a plastoquinone + NADH + (n+1) H(+)(in) = a plastoquinol + NAD(+) + n H(+)(out). The enzyme catalyses a plastoquinone + NADPH + (n+1) H(+)(in) = a plastoquinol + NADP(+) + n H(+)(out). In terms of biological role, NDH shuttles electrons from NAD(P)H:plastoquinone, via FMN and iron-sulfur (Fe-S) centers, to quinones in the photosynthetic chain and possibly in a chloroplast respiratory chain. The immediate electron acceptor for the enzyme in this species is believed to be plastoquinone. Couples the redox reaction to proton translocation, and thus conserves the redox energy in a proton gradient. This chain is NAD(P)H-quinone oxidoreductase subunit J, chloroplastic, found in Amborella trichopoda.